We begin with the raw amino-acid sequence, 530 residues long: Feruloyl esterase C (530 aa).

The first 25 residues, 1-25 (MMLTSAILLLTLGVQLSHADDSSRE), serve as a signal peptide directing secretion. 6 cysteine pairs are disulfide-bonded: cysteine 31/cysteine 78, cysteine 66/cysteine 117, cysteine 190/cysteine 444, cysteine 259/cysteine 276, cysteine 285/cysteine 294, and cysteine 506/cysteine 528. The Acyl-ester intermediate role is filled by serine 191. Residues aspartate 260, aspartate 263, alanine 265, aspartate 267, and valine 269 each coordinate Ca(2+). Residues aspartate 403 and histidine 443 each act as charge relay system in the active site.

It belongs to the tannase family.

It is found in the secreted. The enzyme catalyses feruloyl-polysaccharide + H2O = ferulate + polysaccharide.. Functionally, involved in degradation of plant cell walls. Hydrolyzes the feruloyl-arabinose ester bond in arabinoxylans as well as the feruloyl-galactose and feruloyl-arabinose ester bonds in pectin. Active against methyl esters of sinapate (MSA) and caffeate (MCA). This chain is Feruloyl esterase C (faeC), found in Talaromyces stipitatus (strain ATCC 10500 / CBS 375.48 / QM 6759 / NRRL 1006) (Penicillium stipitatum).